Here is a 350-residue protein sequence, read N- to C-terminus: Small ribosomal subunit biogenesis GTPase RsgA (350 aa).

A compositionally biased stretch (polar residues) spans 1-17; the sequence is MSKNKLSKGQQRRVQAN. The segment at 1–35 is disordered; sequence MSKNKLSKGQQRRVQANHQRRLRTDRKPELDDSQL. The region spanning 103–273 is the CP-type G domain; that stretch reads TSVLTRPDLY…VIDSPGVREF (171 aa). Residues 159–162 and 213–221 each bind GTP; these read NKID and GQSGVGKSS. Residues Cys297, Cys302, His304, and Cys310 each coordinate Zn(2+).

This sequence belongs to the TRAFAC class YlqF/YawG GTPase family. RsgA subfamily. In terms of assembly, monomer. Associates with 30S ribosomal subunit, binds 16S rRNA. Requires Zn(2+) as cofactor.

The protein localises to the cytoplasm. In terms of biological role, one of several proteins that assist in the late maturation steps of the functional core of the 30S ribosomal subunit. Helps release RbfA from mature subunits. May play a role in the assembly of ribosomal proteins into the subunit. Circularly permuted GTPase that catalyzes slow GTP hydrolysis, GTPase activity is stimulated by the 30S ribosomal subunit. This is Small ribosomal subunit biogenesis GTPase RsgA from Yersinia enterocolitica serotype O:8 / biotype 1B (strain NCTC 13174 / 8081).